The sequence spans 451 residues: UPF0210 protein NMCC_1554 (451 aa).

This sequence belongs to the UPF0210 family. In terms of assembly, homodimer.

This is UPF0210 protein NMCC_1554 from Neisseria meningitidis serogroup C (strain 053442).